Consider the following 194-residue polypeptide: uncharacterized protein (194 aa).

This is an uncharacterized protein from Methanocaldococcus jannaschii (strain ATCC 43067 / DSM 2661 / JAL-1 / JCM 10045 / NBRC 100440) (Methanococcus jannaschii).